Here is a 918-residue protein sequence, read N- to C-terminus: Cap-specific mRNA (nucleoside-2'-O-)-methyltransferase 1 (918 aa).

Residues 1–18 show a composition bias toward basic and acidic residues; it reads MADRKSDEGEDEYQHKEQ. 2 disordered regions span residues 1–56 and 62–81; these read MADR…EERA and KRGY…EEEP. The segment covering 19–30 has biased composition (polar residues); the sequence is MVTNRTSSFQPK. Residues 43–56 show a composition bias toward basic and acidic residues; that stretch reads RAADRREEFMEERA. The segment covering 68–80 has biased composition (acidic residues); that stretch reads GDDEEDDFTAEEE. Residues 86-132 enclose the G-patch domain; it reads PLTVAERLMAAMGHKAGEGLGKHGQGISEPIASSTQRGRTGLGHNAG. Residues 236 to 465 form the RrmJ-type SAM-dependent 2'-O-MTase domain; that stretch reads FFQNRAAMKT…ERYITCKGLR (230 aa). S-adenosyl-L-methionine is bound by residues Gly-298 and Asp-379. Lys-419 serves as the catalytic Proton acceptor.

The enzyme catalyses a 5'-end (N(7)-methyl 5'-triphosphoguanosine)-ribonucleoside in mRNA + S-adenosyl-L-methionine = a 5'-end (N(7)-methyl 5'-triphosphoguanosine)-(2'-O-methyl-ribonucleoside) in mRNA + S-adenosyl-L-homocysteine + H(+). S-adenosyl-L-methionine-dependent methyltransferase that mediates mRNA cap1 2'-O-ribose methylation to the 5'-cap structure of mRNAs. Methylates the ribose of the first nucleotide of a m(7)GpppG-capped mRNA to produce m(7)GpppNmp (cap1). Cap1 modification is linked to higher levels of translation. The polypeptide is Cap-specific mRNA (nucleoside-2'-O-)-methyltransferase 1 (Caenorhabditis elegans).